Consider the following 140-residue polypeptide: Large ribosomal subunit protein uL11 (140 aa).

This sequence belongs to the universal ribosomal protein uL11 family. In terms of assembly, part of the ribosomal stalk of the 50S ribosomal subunit. Interacts with L10 and the large rRNA to form the base of the stalk. L10 forms an elongated spine to which L12 dimers bind in a sequential fashion forming a multimeric L10(L12)X complex. Post-translationally, one or more lysine residues are methylated.

Forms part of the ribosomal stalk which helps the ribosome interact with GTP-bound translation factors. The chain is Large ribosomal subunit protein uL11 from Brachyspira hyodysenteriae (strain ATCC 49526 / WA1).